Reading from the N-terminus, the 103-residue chain is Putative double-stranded DNA mimic protein HD_0986 (103 aa).

Belongs to the putative dsDNA mimic protein family.

Functionally, may act as a double-stranded DNA (dsDNA) mimic. Probably regulates the activity of a dsDNA-binding protein. This chain is Putative double-stranded DNA mimic protein HD_0986, found in Haemophilus ducreyi (strain 35000HP / ATCC 700724).